The chain runs to 291 residues: Sesquiterpene cyclase astC (291 aa).

Belongs to the HAD-like hydrolase superfamily.

It carries out the reaction (2E,6E)-farnesyl diphosphate = (S,S)-drim-8-en-11-yl diphosphate. The protein operates within secondary metabolite biosynthesis; terpenoid biosynthesis. In terms of biological role, sesquiterpene cyclase; part of the gene cluster that mediates the biosynthesis of astellolides, drimane-type sesquiterpene esters that show antimicrobial, anti-inflammatory, and anti-tumor activities. The first step in astellolide biosynthesis is performed by the sesquiterpene cyclase astC that catalyzes the formation of drimanyl pyrophosphate from farnesyl pyrophosphate. Drimanyl pyrophosphate is then dephosphorylated by the sesquiterpene phosphatase astI to produce drimanyl monophosphate which is further dephosphorylated to drim-8-ene-11-ol by atsK. Drim-8-ene-11-ol is converted to confertifolin, probably by the cytochrome P450 monooxygenase astD and/or the dehydrogenase astE. The cytochrome P450 monooxygenases astB, astF and astJ then hydroxylate confertifolin at C6, C14, or C15 to form trihydroxy confertifolin. The nonribosomal peptide synthetase astA catalyzes ester bond formation between trihydroxy contifolin and benzoic acid (BA) or 4-hydroxy benzoic acid (4HBA), leading to the formation of dideacetyl astellolides A and B, respectively. Finally, the O-acetyltransferase astG converts dideacetyl astellolides A and B into deacetyl astellolides A and B. In Aspergillus oryzae (strain ATCC 42149 / RIB 40) (Yellow koji mold), this protein is Sesquiterpene cyclase astC.